The primary structure comprises 914 residues: Protein translocase subunit SecA (914 aa).

ATP-binding positions include Q87, 105 to 109 (GEGKT), and D508. Residues C898, C900, C909, and H910 each coordinate Zn(2+).

This sequence belongs to the SecA family. In terms of assembly, monomer and homodimer. Part of the essential Sec protein translocation apparatus which comprises SecA, SecYEG and auxiliary proteins SecDF-YajC and YidC. Requires Zn(2+) as cofactor.

It is found in the cell inner membrane. Its subcellular location is the cytoplasm. It catalyses the reaction ATP + H2O + cellular proteinSide 1 = ADP + phosphate + cellular proteinSide 2.. Its function is as follows. Part of the Sec protein translocase complex. Interacts with the SecYEG preprotein conducting channel. Has a central role in coupling the hydrolysis of ATP to the transfer of proteins into and across the cell membrane, serving both as a receptor for the preprotein-SecB complex and as an ATP-driven molecular motor driving the stepwise translocation of polypeptide chains across the membrane. This chain is Protein translocase subunit SecA, found in Xylella fastidiosa (strain 9a5c).